Consider the following 270-residue polypeptide: Putative serine acetyltransferase (270 aa).

Belongs to the transferase hexapeptide repeat family.

The protein resides in the cytoplasm. Its subcellular location is the nucleus. The enzyme catalyses L-serine + acetyl-CoA = O-acetyl-L-serine + CoA. It functions in the pathway amino-acid biosynthesis; L-cysteine biosynthesis; L-cysteine from L-serine: step 1/2. This chain is Putative serine acetyltransferase, found in Schizosaccharomyces pombe (strain 972 / ATCC 24843) (Fission yeast).